A 395-amino-acid chain; its full sequence is Multidrug resistance protein MdtL (395 aa).

12 consecutive transmembrane segments (helical) span residues 4–24, 42–62, 69–89, 93–113, 131–151, 158–178, 217–237, 247–267, 271–291, 295–315, 333–353, and 358–378; these read FLLC…MYLV, IAFS…GKIA, PVAI…SRAS, LFLS…VVAF, LLNG…HLIM, SLFY…LFIL, VSVI…VMGF, ALTA…LGLF, TLML…SLAH, VTLF…GVAM, LGIA…ILGI, and MLIG…FSVA.

This sequence belongs to the major facilitator superfamily. DHA1 family. MdtL (TC 2.A.1.2.22) subfamily.

The protein localises to the cell inner membrane. The chain is Multidrug resistance protein MdtL from Salmonella agona (strain SL483).